The sequence spans 1151 residues: uncharacterized protein (1151 aa).

Disordered stretches follow at residues 611–633 (FVKG…DEEE), 709–740 (NLVP…IMEV), 753–778 (PPIL…KSIL), 795–880 (PPVI…PPKL), and 1060–1151 (LKEP…TQQE). Composition is skewed to pro residues over residues 754 to 773 (PILP…PQEP) and 811 to 842 (IVPP…PSQP). Residues 867–878 (PITPDTPAITPP) show a composition bias toward low complexity. Positions 1082-1091 (ESDNEDDELD) are enriched in acidic residues. A compositionally biased stretch (polar residues) spans 1131 to 1142 (PVDTSDATKIST).

This is an uncharacterized protein from Ostreid herpesvirus 1 (isolate France) (OsHV-1).